A 442-amino-acid chain; its full sequence is Putative zinc metalloprotease PM1991 (442 aa).

His-21 lines the Zn(2+) pocket. Glu-22 is a catalytic residue. Residue His-25 participates in Zn(2+) binding. The helical transmembrane segment at 97 to 119 (AFVIAAGPIANFLFAILAYFTIY) threads the bilayer. One can recognise a PDZ domain in the interval 198–286 (DWRFDPEKES…FSFVVLTPEL (89 aa)). Helical transmembrane passes span 366–388 (IGLI…MNLF) and 418–440 (LSYR…NDFL).

The protein belongs to the peptidase M50B family. It depends on Zn(2+) as a cofactor.

Its subcellular location is the cell inner membrane. The polypeptide is Putative zinc metalloprotease PM1991 (Pasteurella multocida (strain Pm70)).